We begin with the raw amino-acid sequence, 192 residues long: Large ribosomal subunit protein bL9 (192 aa).

Residues 172 to 192 are disordered; the sequence is DALRPEDFFDPEADGVDEDEA. A compositionally biased stretch (acidic residues) spans 179–192; it reads FFDPEADGVDEDEA.

Belongs to the bacterial ribosomal protein bL9 family.

Its function is as follows. Binds to the 23S rRNA. In Rhizobium johnstonii (strain DSM 114642 / LMG 32736 / 3841) (Rhizobium leguminosarum bv. viciae), this protein is Large ribosomal subunit protein bL9.